A 237-amino-acid chain; its full sequence is Peroxisomal membrane protein 11-1 (237 aa).

Over 1–92 the chain is Cytoplasmic; that stretch reads MSTLDATRAE…TLVLLGKSKN (92 aa). Residues 93 to 113 traverse the membrane as a helical segment; the sequence is ALLSTFLFLDQFVWLGRTGIY. At 114-204 the chain is on the lumenal side; the sequence is KNKERTDRIV…VGLLQLSPKK (91 aa). Residues 205–223 form a helical membrane-spanning segment; it reads ITPRVTGAFGFVTSLISCY. Residues 224-237 lie on the Cytoplasmic side of the membrane; sequence QQLPSRAPAIKVKA.

It belongs to the peroxin-11 family. In terms of tissue distribution, expressed in seedlings, leaf sheaths, flag leaf, panicles and spikelets.

It localises to the peroxisome membrane. Functionally, involved in peroxisomal proliferation. In Oryza sativa subsp. japonica (Rice), this protein is Peroxisomal membrane protein 11-1 (PEX11-1).